We begin with the raw amino-acid sequence, 787 residues long: ATP-dependent RNA helicase dbp4 (787 aa).

The segment at 1–28 is disordered; it reads MAPAAGPRTGKHAKPQRSKTLKRKRGQE. Residues 9 to 25 are compositionally biased toward basic residues; that stretch reads TGKHAKPQRSKTLKRKR. The Q motif motif lies at 47 to 75; sequence KSFSDLPLSEPTASGLASSHYKTLTDIQS. Residues 78-252 form the Helicase ATP-binding domain; that stretch reads ISHALKGRDI…RLSLQDPEYV (175 aa). 91–98 is an ATP binding site; sequence AKTGSGKT. The DEAD box motif lies at 200-203; sequence DEAD. The Helicase C-terminal domain occupies 278 to 437; the sequence is KLDILWSFIR…SIKDQLQNMC (160 aa). 4 disordered regions span residues 494–542, 560–579, 586–618, and 653–776; these read GDDT…DRMF, DDGT…DEDD, RRFD…VRRE, and DEEQ…QTLE. Residues 522 to 542 show a composition bias toward basic and acidic residues; sequence GEKKSKKKEEPQVRTKYDRMF. Composition is skewed to basic and acidic residues over residues 586-595 and 656-690; these read RRFDAGDKDL and QFKA…EIAK. Residues 691-700 show a composition bias toward basic residues; the sequence is QKRREKKEKR. Basic and acidic residues predominate over residues 741-755; that stretch reads KFTEANDREEAEPWY.

This sequence belongs to the DEAD box helicase family. DDX10/DBP4 subfamily. In terms of assembly, interacts with the U3 and U14 snoRNAs. Associates with pre-ribosomal complexes.

The protein localises to the nucleus. The protein resides in the nucleolus. It catalyses the reaction ATP + H2O = ADP + phosphate + H(+). Functionally, ATP-dependent RNA helicase required for ribosome biogenesis. Involved in the release of U14 snoRNA in pre-ribosomal complexes. Required for pre-rRNA cleavage at site A2. The protein is ATP-dependent RNA helicase dbp4 (dbp4) of Aspergillus fumigatus (strain ATCC MYA-4609 / CBS 101355 / FGSC A1100 / Af293) (Neosartorya fumigata).